We begin with the raw amino-acid sequence, 186 residues long: Peptide deformylase (186 aa).

The Fe cation site is built by cysteine 113 and histidine 157. The active site involves glutamate 158. Residue histidine 161 participates in Fe cation binding.

It belongs to the polypeptide deformylase family. Fe(2+) is required as a cofactor.

The enzyme catalyses N-terminal N-formyl-L-methionyl-[peptide] + H2O = N-terminal L-methionyl-[peptide] + formate. In terms of biological role, removes the formyl group from the N-terminal Met of newly synthesized proteins. Requires at least a dipeptide for an efficient rate of reaction. N-terminal L-methionine is a prerequisite for activity but the enzyme has broad specificity at other positions. This is Peptide deformylase from Malacoplasma penetrans (strain HF-2) (Mycoplasma penetrans).